The following is a 139-amino-acid chain: Ribonuclease P protein component (139 aa).

Belongs to the RnpA family. In terms of assembly, consists of a catalytic RNA component (M1 or rnpB) and a protein subunit.

It catalyses the reaction Endonucleolytic cleavage of RNA, removing 5'-extranucleotides from tRNA precursor.. Its function is as follows. RNaseP catalyzes the removal of the 5'-leader sequence from pre-tRNA to produce the mature 5'-terminus. It can also cleave other RNA substrates such as 4.5S RNA. The protein component plays an auxiliary but essential role in vivo by binding to the 5'-leader sequence and broadening the substrate specificity of the ribozyme. The protein is Ribonuclease P protein component of Chlamydia felis (strain Fe/C-56) (Chlamydophila felis).